A 317-amino-acid chain; its full sequence is Beta-ketoacyl-[acyl-carrier-protein] synthase III (317 aa).

Catalysis depends on residues C112 and H244. Positions 245–249 (QANVR) are ACP-binding. Residue N274 is part of the active site.

The protein belongs to the thiolase-like superfamily. FabH family. As to quaternary structure, homodimer.

It is found in the cytoplasm. The enzyme catalyses malonyl-[ACP] + acetyl-CoA + H(+) = 3-oxobutanoyl-[ACP] + CO2 + CoA. The protein operates within lipid metabolism; fatty acid biosynthesis. Its function is as follows. Catalyzes the condensation reaction of fatty acid synthesis by the addition to an acyl acceptor of two carbons from malonyl-ACP. Catalyzes the first condensation reaction which initiates fatty acid synthesis and may therefore play a role in governing the total rate of fatty acid production. Possesses both acetoacetyl-ACP synthase and acetyl transacylase activities. Its substrate specificity determines the biosynthesis of branched-chain and/or straight-chain of fatty acids. In Rickettsia canadensis (strain McKiel), this protein is Beta-ketoacyl-[acyl-carrier-protein] synthase III.